A 349-amino-acid polypeptide reads, in one-letter code: Phenylalanine--tRNA ligase alpha subunit (349 aa).

Position 259 (glutamate 259) interacts with Mg(2+).

This sequence belongs to the class-II aminoacyl-tRNA synthetase family. Phe-tRNA synthetase alpha subunit type 1 subfamily. In terms of assembly, tetramer of two alpha and two beta subunits. Mg(2+) serves as cofactor.

It localises to the cytoplasm. The enzyme catalyses tRNA(Phe) + L-phenylalanine + ATP = L-phenylalanyl-tRNA(Phe) + AMP + diphosphate + H(+). The chain is Phenylalanine--tRNA ligase alpha subunit from Lactobacillus johnsonii (strain CNCM I-12250 / La1 / NCC 533).